The following is a 180-amino-acid chain: Pro-glucagon (180 aa).

A signal peptide spans 1-20 (MKSVYFVAGLFIMLAQGSWQ). The segment at 23-58 (LQDTEEKPRSVSASQTDMLDDPDQMNEDKRHSQGTF) is disordered. A Phosphoserine modification is found at Ser-54. Positions 84–89 (NRNNIA) are excised as a propeptide. 2 positions are modified to phosphoserine: Ser-105 and Ser-108. Arg-127 carries the arginine amide modification. Positions 131 to 145 (DFPEEVAIVEELGRR) are excised as a propeptide. 2 positions are modified to phosphoserine: Ser-150 and Ser-152.

The protein belongs to the glucagon family. Proglucagon is post-translationally processed in a tissue-specific manner in pancreatic A cells and intestinal L cells. In pancreatic A cells, the major bioactive hormone is glucagon cleaved by PCSK2/PC2. In the intestinal L cells PCSK1/PC1 liberates GLP-1, GLP-2, glicentin and oxyntomodulin. GLP-1 is further N-terminally truncated by post-translational processing in the intestinal L cells resulting in GLP-1(7-37) GLP-1-(7-36)amide. The C-terminal amidation is neither important for the metabolism of GLP-1 nor for its effects on the endocrine pancreas.

It is found in the secreted. Functionally, plays a key role in glucose metabolism and homeostasis. Regulates blood glucose by increasing gluconeogenesis and decreasing glycolysis. A counterregulatory hormone of insulin, raises plasma glucose levels in response to insulin-induced hypoglycemia. Plays an important role in initiating and maintaining hyperglycemic conditions in diabetes. In terms of biological role, potent stimulator of glucose-dependent insulin release. Also stimulates insulin release in response to IL6. Plays important roles on gastric motility and the suppression of plasma glucagon levels. May be involved in the suppression of satiety and stimulation of glucose disposal in peripheral tissues, independent of the actions of insulin. Has growth-promoting activities on intestinal epithelium. May also regulate the hypothalamic pituitary axis (HPA) via effects on LH, TSH, CRH, oxytocin, and vasopressin secretion. Increases islet mass through stimulation of islet neogenesis and pancreatic beta cell proliferation. Inhibits beta cell apoptosis. Stimulates intestinal growth and up-regulates villus height in the small intestine, concomitant with increased crypt cell proliferation and decreased enterocyte apoptosis. The gastrointestinal tract, from the stomach to the colon is the principal target for GLP-2 action. Plays a key role in nutrient homeostasis, enhancing nutrient assimilation through enhanced gastrointestinal function, as well as increasing nutrient disposal. Stimulates intestinal glucose transport and decreases mucosal permeability. Its function is as follows. Significantly reduces food intake. Inhibits gastric emptying in humans. Suppression of gastric emptying may lead to increased gastric distension, which may contribute to satiety by causing a sensation of fullness. Functionally, may modulate gastric acid secretion and the gastro-pyloro-duodenal activity. May play an important role in intestinal mucosal growth in the early period of life. The chain is Pro-glucagon (GCG) from Cavia porcellus (Guinea pig).